A 278-amino-acid chain; its full sequence is 2-(acetamidomethylene)succinate hydrolase (278 aa).

Chloride-binding positions include isoleucine 41 and 106–107 (SL). The Nucleophile role is filled by serine 106. Catalysis depends on residues aspartate 130 and histidine 258.

The protein belongs to the AB hydrolase superfamily. Homodimer.

The enzyme catalyses 2-(acetamidomethylene)succinate + 2 H2O + H(+) = succinate semialdehyde + acetate + NH4(+) + CO2. It participates in cofactor degradation; B6 vitamer degradation. In terms of biological role, catalyzes the final reaction in the degradation of vitamin B6 from (E)-2-(acetamidomethylene)succinate (E-2AMS) to produce succinic semialdehyde, acetate, ammonia and carbon dioxide. This is 2-(acetamidomethylene)succinate hydrolase from Mesorhizobium japonicum (strain LMG 29417 / CECT 9101 / MAFF 303099) (Mesorhizobium loti (strain MAFF 303099)).